The chain runs to 62 residues: Andropin (62 aa).

The N-terminal stretch at 1 to 22 (MKYFSVLVVLTLILAIVDQSDA) is a signal peptide.

The protein belongs to the andropin family. As to expression, ejaculatory duct of adult males.

It is found in the secreted. Its function is as follows. Male-specific peptide with moderate activity against Gram-positive bacteria. The sequence is that of Andropin (Anp) from Drosophila teissieri (Fruit fly).